The sequence spans 819 residues: Endonuclease MutS2 (819 aa).

339-346 (GPNTGGKT) contributes to the ATP binding site. In terms of domain architecture, Smr spans 744 to 819 (VDVRGLRVDE…GAGVTVAELA (76 aa)).

This sequence belongs to the DNA mismatch repair MutS family. MutS2 subfamily. In terms of assembly, homodimer. Binds to stalled ribosomes, contacting rRNA.

In terms of biological role, endonuclease that is involved in the suppression of homologous recombination and thus may have a key role in the control of bacterial genetic diversity. Acts as a ribosome collision sensor, splitting the ribosome into its 2 subunits. Detects stalled/collided 70S ribosomes which it binds and splits by an ATP-hydrolysis driven conformational change. Acts upstream of the ribosome quality control system (RQC), a ribosome-associated complex that mediates the extraction of incompletely synthesized nascent chains from stalled ribosomes and their subsequent degradation. Probably generates substrates for RQC. In Gemmatimonas aurantiaca (strain DSM 14586 / JCM 11422 / NBRC 100505 / T-27), this protein is Endonuclease MutS2.